A 141-amino-acid polypeptide reads, in one-letter code: MFKISKEFSFDMAHLLDGHDGKCQNLHGHTYKLQVEISGDLYKSGAKKAMVIDFSDLKSIVKKVILDPMDHAFIYDQTNERESQIATLLQKLNSKTFGVPFRTTAEEIARFIFNRLKHDEQLSISSIRLWETPTSFCEYQE.

Histidine 14 serves as a coordination point for Zn(2+). The active-site Proton acceptor is cysteine 23. Residues histidine 27 and histidine 29 each contribute to the Zn(2+) site. Catalysis depends on charge relay system residues histidine 71 and glutamate 131.

This sequence belongs to the PTPS family. QueD subfamily. Zn(2+) serves as cofactor.

It catalyses the reaction 7,8-dihydroneopterin 3'-triphosphate + H2O = 6-carboxy-5,6,7,8-tetrahydropterin + triphosphate + acetaldehyde + 2 H(+). Its pathway is purine metabolism; 7-cyano-7-deazaguanine biosynthesis. Its function is as follows. Catalyzes the conversion of 7,8-dihydroneopterin triphosphate (H2NTP) to 6-carboxy-5,6,7,8-tetrahydropterin (CPH4) and acetaldehyde. This chain is 6-carboxy-5,6,7,8-tetrahydropterin synthase (queD), found in Haemophilus influenzae (strain ATCC 51907 / DSM 11121 / KW20 / Rd).